The following is an 85-amino-acid chain: Putative membrane protein insertion efficiency factor (85 aa).

The disordered stretch occupies residues 62–85 (KGGFDPVPLKKDKSASKHSHKHNH).

The protein belongs to the UPF0161 family.

It localises to the cell membrane. In terms of biological role, could be involved in insertion of integral membrane proteins into the membrane. In Staphylococcus aureus (strain Mu3 / ATCC 700698), this protein is Putative membrane protein insertion efficiency factor.